The following is a 66-amino-acid chain: Large ribosomal subunit protein bL35 (66 aa).

2 stretches are compositionally biased toward basic residues: residues 1 to 15 (MPKLKTKSGAKKRFK) and 24 to 40 (HAQRGKRHGMIKRTKKQ). Residues 1–40 (MPKLKTKSGAKKRFKVTGTGKVMHAQRGKRHGMIKRTKKQ) form a disordered region.

Belongs to the bacterial ribosomal protein bL35 family.

The polypeptide is Large ribosomal subunit protein bL35 (Bradyrhizobium sp. (strain ORS 278)).